The following is a 188-amino-acid chain: MASIIHAKDLRSGHTFTLDGKIYLVIENSFNKTAMREGIVKCKVKNLRTGSITTEVLTGMKLEQANIEKVKMSFVYQDQNSFVFMNNETYEQIEVPAKLLEYEKNFITENTEALIMRYEDEILGVNLPDQVVIEIDYAEDAVQGNSVNNALKKATLVTGYVIEVPQFIKSKEKVIVSTVDGKYVSRAN.

This sequence belongs to the elongation factor P family.

It localises to the cytoplasm. It functions in the pathway protein biosynthesis; polypeptide chain elongation. In terms of biological role, involved in peptide bond synthesis. Stimulates efficient translation and peptide-bond synthesis on native or reconstituted 70S ribosomes in vitro. Probably functions indirectly by altering the affinity of the ribosome for aminoacyl-tRNA, thus increasing their reactivity as acceptors for peptidyl transferase. In Mycoplasmoides gallisepticum (strain R(low / passage 15 / clone 2)) (Mycoplasma gallisepticum), this protein is Elongation factor P.